A 405-amino-acid polypeptide reads, in one-letter code: S-adenosylmethionine sensor upstream of mTORC1 (405 aa).

A disordered region spans residues 1 to 34 (MEPGAGGRNTARAQRAGSPNTPPPREQERKLEQE). A compositionally biased stretch (basic and acidic residues) spans 25-34 (REQERKLEQE). The S-adenosyl-L-methionine site is built by Arg95, Gly172, Asp190, Asp202, Phe203, and Ser244.

The protein belongs to the BMT2/SAMTOR family. Interacts with the DEPDC5 subunit of the GATOR1 complex; interaction is disrupted when SAMTOR binds S-adenosyl-L-methionine. Interacts with the KICSTOR complex; interaction is disrupted when SAMTOR binds S-adenosyl-L-methionine.

S-adenosyl-L-methionine-binding protein that acts as an inhibitor of mTORC1 signaling via interaction with the GATOR1 and KICSTOR complexes. Acts as a sensor of S-adenosyl-L-methionine to signal methionine sufficiency to mTORC1: in presence of methionine, binds S-adenosyl-L-methionine, leading to disrupt interaction with the GATOR1 and KICSTOR complexes and promote mTORC1 signaling. Upon methionine starvation, S-adenosyl-L-methionine levels are reduced, thereby promoting the association with GATOR1 and KICSTOR, leading to inhibit mTORC1 signaling. Probably also acts as a S-adenosyl-L-methionine-dependent methyltransferase (Potential). The polypeptide is S-adenosylmethionine sensor upstream of mTORC1 (Homo sapiens (Human)).